Consider the following 109-residue polypeptide: Thioredoxin (109 aa).

The region spanning 2-107 (SISQVIDTSF…LLNTLQKHLK (106 aa)) is the Thioredoxin domain. Catalysis depends on nucleophile residues Cys-31 and Cys-34. An intrachain disulfide couples Cys-31 to Cys-34.

Belongs to the thioredoxin family.

The protein resides in the plastid. It localises to the chloroplast. Functionally, participates in various redox reactions through the reversible oxidation of its active center dithiol to a disulfide and catalyzes dithiol-disulfide exchange reactions. This Griffithsia pacifica (Red alga) protein is Thioredoxin (trxA).